The sequence spans 160 residues: MPFFYVPGVGLSTLEQKLTEMITAPVEALGYELVGIEFIRGRTSTLRIYIDSEDGITVDDCADVSHQVSSVLDVEDPITVAYNLEVSSPGLDRPLFTAEHYARYTGEEVTLVLRMAVQNRRKWQGIIKAVDGEMITVAVDGKDEVFALSNIQRANLVPQF.

This sequence belongs to the RimP family.

It is found in the cytoplasm. Its function is as follows. Required for maturation of 30S ribosomal subunits. This chain is Ribosome maturation factor RimP, found in Cronobacter sakazakii (strain ATCC BAA-894) (Enterobacter sakazakii).